A 510-amino-acid polypeptide reads, in one-letter code: Bifunctional pantoate ligase/cytidylate kinase (510 aa).

Residues 1–276 (MKKVIIRKTE…CGETRLIDHV (276 aa)) are pantoate--beta-alanine ligase. 29-36 (MGNLHDGH) contributes to the ATP binding site. H36 (proton donor) is an active-site residue. Q61 provides a ligand contact to (R)-pantoate. Residue Q61 participates in beta-alanine binding. ATP is bound at residue 150–153 (GEKD). Residue Q156 coordinates (R)-pantoate. 187–190 (LSSR) lines the ATP pocket. Positions 277–510 (FLMKRRPIIA…DRIPKETEIK (234 aa)) are cytidylate kinase.

The protein in the N-terminal section; belongs to the pantothenate synthetase family. In the C-terminal section; belongs to the cytidylate kinase family. Type 1 subfamily.

Its subcellular location is the cytoplasm. The enzyme catalyses (R)-pantoate + beta-alanine + ATP = (R)-pantothenate + AMP + diphosphate + H(+). It catalyses the reaction CMP + ATP = CDP + ADP. It carries out the reaction dCMP + ATP = dCDP + ADP. It participates in cofactor biosynthesis; (R)-pantothenate biosynthesis; (R)-pantothenate from (R)-pantoate and beta-alanine: step 1/1. Catalyzes the condensation of pantoate with beta-alanine in an ATP-dependent reaction via a pantoyl-adenylate intermediate. Its function is as follows. Catalyzes the transfer of a phosphate group from ATP to either CMP or dCMP to form CDP or dCDP and ADP, respectively. This is Bifunctional pantoate ligase/cytidylate kinase from Prochlorococcus marinus (strain MIT 9301).